A 382-amino-acid polypeptide reads, in one-letter code: D-galactonate dehydratase (382 aa).

Residue Asp183 participates in Mg(2+) binding. His185 functions as the Proton donor in the catalytic mechanism. Glu209 and Glu235 together coordinate Mg(2+). The active-site Proton acceptor is His285.

Belongs to the mandelate racemase/muconate lactonizing enzyme family. GalD subfamily. Mg(2+) serves as cofactor.

The catalysed reaction is D-galactonate = 2-dehydro-3-deoxy-D-galactonate + H2O. It functions in the pathway carbohydrate acid metabolism; D-galactonate degradation; D-glyceraldehyde 3-phosphate and pyruvate from D-galactonate: step 1/3. Its function is as follows. Catalyzes the dehydration of D-galactonate to 2-keto-3-deoxy-D-galactonate. This Salmonella gallinarum (strain 287/91 / NCTC 13346) protein is D-galactonate dehydratase.